We begin with the raw amino-acid sequence, 101 residues long: UPF0235 protein Cpha266_2081 (101 aa).

The protein belongs to the UPF0235 family.

This Chlorobium phaeobacteroides (strain DSM 266 / SMG 266 / 2430) protein is UPF0235 protein Cpha266_2081.